Reading from the N-terminus, the 277-residue chain is MLTKRALRTTDPYRRVLSRGFSVLNRPSPNYPGHVPLTTLERGALAVGSAIGSLINPRRADLIAALGEATATPYFIYRLRDVMLSDPTGRRILRNKPSINSKTLSVEYLRSLSPNTVGRTYVDWLDREGVGPDTRAKVQYIDDKECAYVMQRYRECHDFYHAITGLPVVAEGEIALKTFEFANTLLPMTGLSMFAVMRLKPEEKERFWKLHLPWAVRNGLASKAVINVYWEEQLERDVDELRKELGIEKPVDLREIRKIMRRQKKMAEEAAKTKKRY.

Residues Met1–Arg14 constitute a mitochondrion transit peptide. His157, Asp158, His161, and Glu173 together coordinate Zn(2+).

It belongs to the COQ4 family. In terms of assembly, component of a multi-subunit COQ enzyme complex, composed of at least COQ3, COQ4, COQ5, COQ6, COQ7 and COQ9. Requires Zn(2+) as cofactor.

It is found in the mitochondrion inner membrane. The enzyme catalyses a 4-hydroxy-3-methoxy-5-(all-trans-polyprenyl)benzoate + H(+) = a 2-methoxy-6-(all-trans-polyprenyl)phenol + CO2. It participates in cofactor biosynthesis; ubiquinone biosynthesis. In terms of biological role, lyase that catalyzes the C1-decarboxylation of 4-hydroxy-3-methoxy-5-(all-trans-polyprenyl)benzoic acid into 2-methoxy-6-(all-trans-polyprenyl)phenol during ubiquinone biosynthesis. The protein is Ubiquinone biosynthesis protein COQ4, mitochondrial of Ajellomyces capsulatus (strain NAm1 / WU24) (Darling's disease fungus).